We begin with the raw amino-acid sequence, 188 residues long: 2-amino-4-hydroxy-6-hydroxymethyldihydropteridine pyrophosphokinase (188 aa).

This sequence belongs to the HPPK family.

The enzyme catalyses 6-hydroxymethyl-7,8-dihydropterin + ATP = (7,8-dihydropterin-6-yl)methyl diphosphate + AMP + H(+). It functions in the pathway cofactor biosynthesis; tetrahydrofolate biosynthesis; 2-amino-4-hydroxy-6-hydroxymethyl-7,8-dihydropteridine diphosphate from 7,8-dihydroneopterin triphosphate: step 4/4. Catalyzes the transfer of pyrophosphate from adenosine triphosphate (ATP) to 6-hydroxymethyl-7,8-dihydropterin, an enzymatic step in folate biosynthesis pathway. This Mycobacterium tuberculosis (strain ATCC 25618 / H37Rv) protein is 2-amino-4-hydroxy-6-hydroxymethyldihydropteridine pyrophosphokinase (folK).